Reading from the N-terminus, the 134-residue chain is MALLNIFDIAGSALAAQSKRLNVAASNLANADSVTGPDGQPYRAKQVVFQVDAAPGQATGGVKVASVIESQAPEKLVYEPGNPLADANGYVKMPNVDVVGEMVNTMSASRSYQANIEVLNTVKSMMLKTLTLGQ.

Belongs to the flagella basal body rod proteins family. The basal body constitutes a major portion of the flagellar organelle and consists of four rings (L,P,S, and M) mounted on a central rod. The rod consists of about 26 subunits of FlgG in the distal portion, and FlgB, FlgC and FlgF are thought to build up the proximal portion of the rod with about 6 subunits each.

It localises to the bacterial flagellum basal body. This is Flagellar basal-body rod protein FlgC (flgC) from Salmonella typhi.